Here is a 57-residue protein sequence, read N- to C-terminus: Preprotein translocase subunit SecG (57 aa).

Topologically, residues 1–33 are cytoplasmic; that stretch reads MARRRKYEGLNPFVAAGLIKFSEEGELERIKLN. A helical transmembrane segment spans residues 34 to 55; the sequence is PRTAILVSITVIIAILVLNILH. Residues 56 to 57 are Extracellular-facing; sequence PL.

It belongs to the SEC61-beta family. As to quaternary structure, component of the protein translocase complex. Heterotrimer consisting of alpha (SecY), beta (SecG) and gamma (SecE) subunits. Can form oligomers of the heterotrimer.

It is found in the cell membrane. Functionally, involved in protein export. The function of the beta subunit is unknown, but it may be involved in stabilization of the trimeric complex. The polypeptide is Preprotein translocase subunit SecG (Pyrobaculum islandicum (strain DSM 4184 / JCM 9189 / GEO3)).